A 520-amino-acid polypeptide reads, in one-letter code: MGEKVYIFDTTLRDGEQAPGFSMTTEEKLQMAHQLAKLNVDIIEAGFAAASKGDFEAVNRIAKEVKGPVICSLARALESDIEIAAKALEPAERKRIHTFIATSPIHMEYKLRMTPDQVLERIKKAVSFARNFTDDVEFSCEDATRSEREFLYRAIETAIKHGATVINIPDTVGYAIPEEFGQLIEDIMNNVPNIDKVILSVHCHDDLGLATANSLTAVKHGARQVECTINGIGERAGNAALEEVVMALKVRKDFFGDLYTDVNTKEIYKTSRLLCRITGNFVQPNKAIVGDNAFAHESGIHQHGVLSHRMTYEIMNPEDVGFPMSRIVLGKHSGRHALKRRLEELGFKFTKEELDRIFEKFKELADRKKEVYDEDLEALIYQEFMKIEDHEPVKVLHFQVQSGDNMIPTATVKLEFKGEEREASSTGNGPVDATIKAIQKALGIEPKLLDYSIKALTPNTDAQAEARVVLELDGVKASGRGVDTDIIKASVKAFTDALNRAIVRKEYIIQRQEIREEGTV.

Positions 5 to 268 constitute a Pyruvate carboxyltransferase domain; sequence VYIFDTTLRD…YTDVNTKEIY (264 aa). Residues Asp-14, His-202, His-204, and Asn-238 each contribute to the Mn(2+) site. Residues 394–520 are regulatory domain; that stretch reads KVLHFQVQSG…RQEIREEGTV (127 aa).

Belongs to the alpha-IPM synthase/homocitrate synthase family. LeuA type 1 subfamily. Homodimer. Requires Mn(2+) as cofactor.

It localises to the cytoplasm. The catalysed reaction is 3-methyl-2-oxobutanoate + acetyl-CoA + H2O = (2S)-2-isopropylmalate + CoA + H(+). It functions in the pathway amino-acid biosynthesis; L-leucine biosynthesis; L-leucine from 3-methyl-2-oxobutanoate: step 1/4. Functionally, catalyzes the condensation of the acetyl group of acetyl-CoA with 3-methyl-2-oxobutanoate (2-ketoisovalerate) to form 3-carboxy-3-hydroxy-4-methylpentanoate (2-isopropylmalate). This Aquifex aeolicus (strain VF5) protein is 2-isopropylmalate synthase.